A 453-amino-acid chain; its full sequence is Chromosomal replication initiator protein DnaA (453 aa).

The domain I, interacts with DnaA modulators stretch occupies residues 1 to 73; sequence MNISPQYLWN…AQEVASVVGY (73 aa). The interval 73-112 is domain II; sequence YPVDIQLTTAEGETMAMTGEAQSYQEKSLTQIAPESPKLN. A domain III, AAA+ region region spans residues 113 to 329; sequence QLNPRYTFSR…GALIRAIAYT (217 aa). Residues glycine 157, glycine 159, lysine 160, and threonine 161 each contribute to the ATP site. The segment at 330–453 is domain IV, binds dsDNA; that stretch reads SISGLSMTVQ…RINMASRTQS (124 aa).

The protein belongs to the DnaA family. As to quaternary structure, oligomerizes as a right-handed, spiral filament on DNA at oriC.

The protein resides in the cytoplasm. Its function is as follows. Plays an essential role in the initiation and regulation of chromosomal replication. ATP-DnaA binds to the origin of replication (oriC) to initiate formation of the DNA replication initiation complex once per cell cycle. Binds the DnaA box (a 9 base pair repeat at the origin) and separates the double-stranded (ds)DNA. Forms a right-handed helical filament on oriC DNA; dsDNA binds to the exterior of the filament while single-stranded (ss)DNA is stabiized in the filament's interior. The ATP-DnaA-oriC complex binds and stabilizes one strand of the AT-rich DNA unwinding element (DUE), permitting loading of DNA polymerase. After initiation quickly degrades to an ADP-DnaA complex that is not apt for DNA replication. Binds acidic phospholipids. The protein is Chromosomal replication initiator protein DnaA of Rippkaea orientalis (strain PCC 8801 / RF-1) (Cyanothece sp. (strain PCC 8801)).